A 604-amino-acid chain; its full sequence is uncharacterized protein (604 aa).

The ABC transmembrane type-1 domain occupies 45–329 (LPLSFLTVLI…LGQVYNQLLM (285 aa)). Helical transmembrane passes span 49-69 (FLTV…IGVY), 82-102 (LLIQ…AANV), 162-182 (VINL…LFTL), 184-204 (PELT…STSL), 273-293 (LVEM…ATLI), and 297-317 (TITI…WEPI). Residues 363 to 597 (ISFEEVEFSY…GGIYAGLVKA (235 aa)) enclose the ABC transporter domain. 396–403 (GHTGSGKT) contacts ATP.

Belongs to the ABC transporter superfamily.

It localises to the cell membrane. This is an uncharacterized protein from Bacillus subtilis (strain 168).